Reading from the N-terminus, the 771-residue chain is Receptor like protein 22 (771 aa).

An N-terminal signal peptide occupies residues 1 to 20 (MSNLRLRLLSLVSILYCIAA). The Extracellular segment spans residues 21–729 (LRCRPDQTET…EEEEILEWRA (709 aa)). N-linked (GlcNAc...) asparagine glycans are attached at residues asparagine 46, asparagine 58, asparagine 80, asparagine 93, asparagine 134, and asparagine 158. 12 LRR repeats span residues 86-110 (LSHLRYLNLSFNNFDSSPLSSAFGQ), 112-135 (NNLEVLLLSSNGFTGQVPSSIRNL), 136-159 (TKLTQLNLPHNKLTGDLPSLVQNL), 160-183 (TKLLALDLSYNQFSGTIPSSFFTM), 185-206 (FLSYLDLSENHLTGSFEISNSS), 207-230 (SKLENLNLGNNHFETEIIDPVLRL), 232-254 (NLRYLSLSFLNTSHPIDLSIFSP), 255-281 (LQSLTHLDLHGNSLTLTSVYSDIDFPK), 283-303 (MEILLLSGCNISEFPRFLKSL), 304-327 (KKLWYLDLSSNRIKGNVPDWIWSL), 329-350 (LLVSLDLSNNSFTGFNGSLDHV), and 353-377 (NSSVQVLDIALNSFKGSFPNPPVSI). N-linked (GlcNAc...) asparagine glycosylation occurs at asparagine 204. Asparagine 242 is a glycosylation site (N-linked (GlcNAc...) asparagine). Asparagine 292 carries N-linked (GlcNAc...) asparagine glycosylation. Residues asparagine 337, asparagine 344, asparagine 353, asparagine 379, asparagine 384, asparagine 397, asparagine 410, asparagine 421, asparagine 466, and asparagine 481 are each glycosylated (N-linked (GlcNAc...) asparagine). The LRR 13; degenerate repeat unit spans residues 378–397 (INLSAWNNSFTGDIPLSVCN). LRR repeat units lie at residues 398–419 (RTSLDVLDLSYNNFTGSIPPCM), 420–443 (GNFTIVNLRKNKLEGNIPDEFYSG), 445–467 (LTQTLDVGYNQLTGELPRSLLNC), 469–491 (FIRFLSVDHNRINDSFPLWLKAL), 492–516 (PNLKVLTLRSNSFHGPMSPPDDQSS), 519–543 (FPKLQILEISHNRFTGSLPTNYFAN), 588–612 (LTFYSAIDFSGNKLEGEIPESIGLL), 613–636 (KTLIALNLSNNSFTGHIPMSFANV), 637–660 (TELESLDLSGNKLSGEIPQELGRL), and 662–685 (YLAYIDVSDNQLTGKIPQGTQIIG). A glycan (N-linked (GlcNAc...) asparagine) is linked at asparagine 543. 3 N-linked (GlcNAc...) asparagine glycosylation sites follow: asparagine 619, asparagine 622, and asparagine 635. The chain crosses the membrane as a helical span at residues 730-750 (AAIGYGPGVLFGLAIGHVVAL). Over 751-771 (YKPGWFIKNNGQNRLRGIRHP) the chain is Cytoplasmic.

This sequence belongs to the RLP family.

It localises to the cell membrane. This Arabidopsis thaliana (Mouse-ear cress) protein is Receptor like protein 22.